Here is a 458-residue protein sequence, read N- to C-terminus: MNTSYSQSNLRHNQILIWLCILSFFSVLNEMVLNVSLPDIANDFNKPPASTNWVNTAFMLTFSIGTAVYGKLSDQLGIKRLLLFGIIINCFGSVIGFVGHSFFSLLIMARFIQGAGAAAFPALVMVVVARYIPKENRGKAFGLIGSIVAMGEGVGPAIVGMIAHYIHWSYLLLIPMITIITVPFLMKLLKKEVRIKGHFDIKGIILMSVGIVFFMLFTTSYSISFLIVSVLSFLIFVKHIRKVTDPFVDPGLGKNILFMIGVLCGGIIFGTVAGFVSMVPYMMKDVHQLSTAEIGSVIIFPGTMSVIIFGYIGGILVDRRGPLYVLNIGVTFLSVSFLTAFFLLETTSWFMTIIIVFVLGGLSFTKTVIPTIVSSSLKQQEAGAGMSLLNFTSFLSEGTGIAIVGGLLSIPLLDQRLLPMGVDQSTYLYSNLLLLFSGIIVISGLVTVNVYKHSQRDF.

A run of 12 helical transmembrane segments spans residues 12–33 (HNQI…EMVL), 81–100 (LLLF…FVGH), 111–129 (FIQG…VVVA), 140–162 (AFGL…VGMI), 165–185 (YIHW…VPFL), 201–221 (IKGI…TTSY), 223–240 (ISFL…VKHI), 256–276 (ILFM…AGFV), 297–317 (VIIF…GILV), 324–344 (YVLN…FFLL), 346–365 (TTSW…LSFT), and 432–451 (LLLL…VNVY).

Belongs to the major facilitator superfamily. TCR/Tet family.

The protein localises to the cell membrane. In terms of biological role, resistance to tetracycline by an active tetracycline efflux. This is an energy-dependent process that decreases the accumulation of the antibiotic in whole cells. This protein functions as a metal-tetracycline/H(+) antiporter. In Streptococcus agalactiae, this protein is Tetracycline resistance protein (tet).